We begin with the raw amino-acid sequence, 485 residues long: Cobyric acid synthase (485 aa).

A GATase cobBQ-type domain is found at 250 to 436; it reads RRIVACPILP…IHGLLASPAL (187 aa). C332 serves as the catalytic Nucleophile. H428 is an active-site residue.

The protein belongs to the CobB/CobQ family. CobQ subfamily.

The protein operates within cofactor biosynthesis; adenosylcobalamin biosynthesis. Its function is as follows. Catalyzes amidations at positions B, D, E, and G on adenosylcobyrinic A,C-diamide. NH(2) groups are provided by glutamine, and one molecule of ATP is hydrogenolyzed for each amidation. The polypeptide is Cobyric acid synthase (Sphingopyxis alaskensis (strain DSM 13593 / LMG 18877 / RB2256) (Sphingomonas alaskensis)).